The chain runs to 1901 residues: A-kinase anchor protein 11 (1901 aa).

Ser18, Ser422, Ser433, Ser444, and Ser448 each carry phosphoserine. The disordered stretch occupies residues 407-443; sequence ALPANVRKPTPRKPESPYGNLCDAPDSPRPVKASRED. Disordered stretches follow at residues 843-864 and 971-993; these read NPGNQNDFKPTNDDIEMQSSSK and LPVSGEESQLTPEKSPKFPDSQN. Residues Thr981 and Thr1100 each carry the phosphothreonine modification. A disordered region spans residues 1131–1153; that stretch reads EFAPATPPSTPHNSSVGSLSENE. Positions 1141–1153 are enriched in polar residues; the sequence is PHNSSVGSLSENE. Residues Ser1171, Ser1176, Ser1177, Ser1242, and Ser1337 each carry the phosphoserine modification. At Thr1485 the chain carries Phosphothreonine. Position 1580 is a phosphoserine (Ser1580). The interval 1650 to 1663 is PKA-RII subunit binding domain; the sequence is LAEKIVAEAIEKAE. Positions 1708 to 1805 are disordered; that stretch reads KEIEDFQSTE…HEDEVEGLGQ (98 aa). Polar residues predominate over residues 1713–1740; sequence FQSTESVSSQQMNLSIGDDSTGSWSNLS. Residues 1747–1756 show a composition bias toward basic and acidic residues; that stretch reads DESSSFHHLS. Residues 1757–1772 are compositionally biased toward low complexity; it reads ESNGNSSSWSSLGLEG. Over residues 1787-1801 the composition is skewed to acidic residues; that stretch reads DGPDDKDEEHEDEVE.

It belongs to the AKAP110 family. As to expression, expressed in heart, brain, lung, liver, kidney, testis and ovary. Weakly expressed in skeletal muscle, pancreas and spleen.

It is found in the cytoplasm. Its subcellular location is the cytoskeleton. The protein resides in the microtubule organizing center. The protein localises to the centrosome. Binds to type II regulatory subunits of protein kinase A and anchors/targets them. The sequence is that of A-kinase anchor protein 11 (AKAP11) from Homo sapiens (Human).